The primary structure comprises 396 residues: Ornithine aminotransferase (396 aa).

Lys-255 carries the N6-(pyridoxal phosphate)lysine modification.

This sequence belongs to the class-III pyridoxal-phosphate-dependent aminotransferase family. OAT subfamily. Requires pyridoxal 5'-phosphate as cofactor.

The protein resides in the cytoplasm. The catalysed reaction is a 2-oxocarboxylate + L-ornithine = L-glutamate 5-semialdehyde + an L-alpha-amino acid. It functions in the pathway amino-acid biosynthesis; L-proline biosynthesis; L-glutamate 5-semialdehyde from L-ornithine: step 1/1. In terms of biological role, catalyzes the interconversion of ornithine to glutamate semialdehyde. In Bacillus anthracis (strain A0248), this protein is Ornithine aminotransferase.